The following is a 239-amino-acid chain: Short palate, lung and nasal epithelium carcinoma-associated protein 2A (239 aa).

Residues 1-20 (MVQLWKLVLLCGLLAGTSES) form the signal peptide. A disulfide bridge links Cys-166 with Cys-209.

Belongs to the BPI/LBP/Plunc superfamily. Plunc family. As to expression, detected in salivary tissues: parotid, submandibular and sublingual glands.

The protein resides in the secreted. The chain is Short palate, lung and nasal epithelium carcinoma-associated protein 2A (SPLUNC2A) from Bos taurus (Bovine).